Consider the following 442-residue polypeptide: F-box protein KIB2 (442 aa).

The F-box domain occupies 62–109 (SKQPVLVLDLLRSILERLSFVDFHRGRCISLEWYSASESCLAVKNPTS). Positions 236–243 (HKKGDENY) match the Nuclear localization signal motif.

Interacts with ASK7/BIN2/SK21.

The protein localises to the cytoplasm. The protein resides in the nucleus. It localises to the nucleolus. In terms of biological role, component of SCF(ASK-cullin-F-box) E3 ubiquitin ligase complexes, which may mediate the ubiquitination and subsequent proteasomal degradation of target proteins. Required for brassinosteroid (BR) signal transduction. Mediates ASK7/BIN2/SK21 inactivation both by competing with substrate binding (e.g. BZR1) and by promoting its ubiquitination and subsequent proteasomal degradation. In Arabidopsis thaliana (Mouse-ear cress), this protein is F-box protein KIB2.